Reading from the N-terminus, the 416-residue chain is Notoamide biosynthesis cluster protein N' (416 aa).

A signal peptide spans 1–16; sequence MRAALLTLAFTALAAA. Asn-119 and Asn-262 each carry an N-linked (GlcNAc...) asparagine glycan.

Its function is as follows. Part of the gene cluster that mediates the biosynthesis of notoamide, a fungal indole alkaloid that belongs to a family of natural products containing a characteristic bicyclo[2.2.2]diazaoctane core. The first step of notoamide biosynthesis involves coupling of L-proline and L-tryptophan by the bimodular NRPS notE', to produce cyclo-L-tryptophan-L-proline called brevianamide F. The reverse prenyltransferase notF' then acts as a deoxybrevianamide E synthase and converts brevianamide F to deoxybrevianamide E via reverse prenylation at C-2 of the indole ring leading to the bicyclo[2.2.2]diazaoctane core. Deoxybrevianamide E is further hydroxylated at C-6 of the indole ring, likely catalyzed by the cytochrome P450 monooxygenase notG', to yield 6-hydroxy-deoxybrevianamide E. 6-hydroxy-deoxybrevianamide E is a specific substrate of the prenyltransferase notC' for normal prenylation at C-7 to produce 6-hydroxy-7-prenyl-deoxybrevianamide, also called notoamide S. As the proposed pivotal branching point in notoamide biosynthesis, notoamide S can be diverted to notoamide E through an oxidative pyran ring closure putatively catalyzed by either notH' cytochrome P450 monooxygenase or the notD' FAD-linked oxidoreductase. This step would be followed by an indole 2,3-epoxidation-initiated pinacol-like rearrangement catalyzed by the notB' FAD-dependent monooxygenase leading to the formation of notoamide C and notoamide D. On the other hand notoamide S is converted to notoamide T by notH' (or notD'), a bifunctional oxidase that also functions as the intramolecular Diels-Alderase responsible for generation of (-)-notoamide T. To generate antipodal (+)-notoaminide T, notH (or notD) in Aspergillus strain MF297-2 is expected to catalyze a Diels-Alder reaction leading to the opposite stereochemistry. The remaining oxidoreductase notD' (or notH') likely catalyzes the oxidative pyran ring formation to yield (-)-stephacidin A. The FAD-dependent monooxygenase notI' is highly similar to notB' and is predicted to catalyze a similar conversion from (-)-stephacidin A to (+)-notoamide B via the 2,3-epoxidation of (-)-stephacidin A followed by a pinacol-type rearrangement. Finally, it remains unclear which enzyme could be responsible for the final hydroxylation steps leading to notoamide A and sclerotiamide. The function of notN' in the notoamide biosynthesis has not been determined yet. The chain is Notoamide biosynthesis cluster protein N' from Aspergillus versicolor.